Consider the following 511-residue polypeptide: Sodium/hydrogen exchanger 9B1 (511 aa).

The segment covering M1 to H10 has biased composition (basic and acidic residues). The disordered stretch occupies residues M1 to S41. A compositionally biased stretch (polar residues) spans F16 to T31. Helical transmembrane passes span I67–S87, L95–I115, R116–I136, W152–L172, L187–M207, F215–V235, V260–V280, I284–V304, I337–K357, I368–V388, I398–I418, I431–V451, and V472–G492.

The protein belongs to the monovalent cation:proton antiporter 1 (CPA1) transporter (TC 2.A.36) family.

The protein localises to the cell projection. The protein resides in the cilium. Its subcellular location is the flagellum membrane. Functionally, sperm-specific Na(+)/H(+) exchanger involved in intracellular pH regulation of spermatozoa. Involved in sperm motility and fertility. The sequence is that of Sodium/hydrogen exchanger 9B1 (SLC9B1) from Macaca fascicularis (Crab-eating macaque).